The sequence spans 237 residues: Ras-related protein RABA3 (237 aa).

Residue 35 to 42 participates in GTP binding; sequence GDSAVGKT. Residues 57-65 carry the Effector region motif; that stretch reads SKSTIGVEF. Residues 83–87, 141–144, and 172–173 each bind GTP; these read DTAGQ, NKAD, and SA. 2 S-geranylgeranyl cysteine lipidation sites follow: Cys-235 and Cys-237. Cys-237 is subject to Cysteine methyl ester.

It belongs to the small GTPase superfamily. Rab family. As to expression, expressed in root tips.

It localises to the endosome membrane. The protein localises to the golgi apparatus. It is found in the trans-Golgi network membrane. Functionally, intracellular vesicle trafficking and protein transport. The polypeptide is Ras-related protein RABA3 (RABA3) (Arabidopsis thaliana (Mouse-ear cress)).